Consider the following 597-residue polypeptide: Elongation factor 4 (597 aa).

The 183-residue stretch at 2 to 184 folds into the tr-type G domain; it reads NNIRNFSIIA…SLITKVPPPK (183 aa). Residues 14-19 and 131-134 each bind GTP; these read DHGKST and NKID.

Belongs to the TRAFAC class translation factor GTPase superfamily. Classic translation factor GTPase family. LepA subfamily.

The protein resides in the cell inner membrane. The catalysed reaction is GTP + H2O = GDP + phosphate + H(+). Functionally, required for accurate and efficient protein synthesis under certain stress conditions. May act as a fidelity factor of the translation reaction, by catalyzing a one-codon backward translocation of tRNAs on improperly translocated ribosomes. Back-translocation proceeds from a post-translocation (POST) complex to a pre-translocation (PRE) complex, thus giving elongation factor G a second chance to translocate the tRNAs correctly. Binds to ribosomes in a GTP-dependent manner. This is Elongation factor 4 from Janthinobacterium sp. (strain Marseille) (Minibacterium massiliensis).